Consider the following 62-residue polypeptide: Photosystem II reaction center protein Z (62 aa).

Helical transmembrane passes span 8-28 and 41-61; these read AVFA…VVFA and FSGT…NSLI.

This sequence belongs to the PsbZ family. As to quaternary structure, PSII is composed of 1 copy each of membrane proteins PsbA, PsbB, PsbC, PsbD, PsbE, PsbF, PsbH, PsbI, PsbJ, PsbK, PsbL, PsbM, PsbT, PsbY, PsbZ, Psb30/Ycf12, at least 3 peripheral proteins of the oxygen-evolving complex and a large number of cofactors. It forms dimeric complexes.

The protein resides in the plastid. The protein localises to the chloroplast thylakoid membrane. Functionally, may control the interaction of photosystem II (PSII) cores with the light-harvesting antenna, regulates electron flow through the 2 photosystem reaction centers. PSII is a light-driven water plastoquinone oxidoreductase, using light energy to abstract electrons from H(2)O, generating a proton gradient subsequently used for ATP formation. The protein is Photosystem II reaction center protein Z of Calycanthus floridus var. glaucus (Eastern sweetshrub).